Consider the following 69-residue polypeptide: Cytochrome c oxidase subunit 8A, mitochondrial (69 aa).

The transit peptide at 1 to 25 (MSVLTPLLLRGLTGPARRLPVPRAQ) directs the protein to the mitochondrion. An SIFI-degron motif is present at residues 2–19 (SVLTPLLLRGLTGPARRL). At 26 to 36 (IHSKPPREQLG) the chain is on the mitochondrial matrix side. A helical membrane pass occupies residues 37 to 60 (TMDIAIGLTSCFLCFLLPSGWVLS). Residues 61 to 69 (HMENYKKRE) are Mitochondrial intermembrane-facing.

The protein belongs to the cytochrome c oxidase VIII family. In terms of assembly, component of the cytochrome c oxidase (complex IV, CIV), a multisubunit enzyme composed of 14 subunits. The complex is composed of a catalytic core of 3 subunits MT-CO1, MT-CO2 and MT-CO3, encoded in the mitochondrial DNA, and 11 supernumerary subunits COX4I1 (or COX4I2), COX5A, COX5B, COX6A2 (or COX6A1), COX6B1 (or COX6B2), COX6C, COX7A1 (or COX7A2), COX7B, COX7C, COX8B and NDUFA4, which are encoded in the nuclear genome. The complex exists as a monomer or a dimer and forms supercomplexes (SCs) in the inner mitochondrial membrane with NADH-ubiquinone oxidoreductase (complex I, CI) and ubiquinol-cytochrome c oxidoreductase (cytochrome b-c1 complex, complex III, CIII), resulting in different assemblies (supercomplex SCI(1)III(2)IV(1) and megacomplex MCI(2)III(2)IV(2)). In response to mitochondrial stress, the precursor protein is ubiquitinated by the SIFI complex in the cytoplasm before mitochondrial import, leading to its degradation. Within the SIFI complex, UBR4 initiates ubiquitin chain that are further elongated or branched by KCMF1.

It localises to the mitochondrion inner membrane. Its pathway is energy metabolism; oxidative phosphorylation. Its function is as follows. Component of the cytochrome c oxidase, the last enzyme in the mitochondrial electron transport chain which drives oxidative phosphorylation. The respiratory chain contains 3 multisubunit complexes succinate dehydrogenase (complex II, CII), ubiquinol-cytochrome c oxidoreductase (cytochrome b-c1 complex, complex III, CIII) and cytochrome c oxidase (complex IV, CIV), that cooperate to transfer electrons derived from NADH and succinate to molecular oxygen, creating an electrochemical gradient over the inner membrane that drives transmembrane transport and the ATP synthase. Cytochrome c oxidase is the component of the respiratory chain that catalyzes the reduction of oxygen to water. Electrons originating from reduced cytochrome c in the intermembrane space (IMS) are transferred via the dinuclear copper A center (CU(A)) of subunit 2 and heme A of subunit 1 to the active site in subunit 1, a binuclear center (BNC) formed by heme A3 and copper B (CU(B)). The BNC reduces molecular oxygen to 2 water molecules using 4 electrons from cytochrome c in the IMS and 4 protons from the mitochondrial matrix. The sequence is that of Cytochrome c oxidase subunit 8A, mitochondrial (COX8A) from Bos taurus (Bovine).